The primary structure comprises 189 residues: UPF0398 protein BH1768 (189 aa).

The protein belongs to the UPF0398 family.

This chain is UPF0398 protein BH1768, found in Halalkalibacterium halodurans (strain ATCC BAA-125 / DSM 18197 / FERM 7344 / JCM 9153 / C-125) (Bacillus halodurans).